The sequence spans 450 residues: Phosphoglucosamine mutase (450 aa).

S101 functions as the Phosphoserine intermediate in the catalytic mechanism. Mg(2+)-binding residues include S101, D241, D243, and D245. S101 carries the post-translational modification Phosphoserine.

This sequence belongs to the phosphohexose mutase family. Requires Mg(2+) as cofactor. In terms of processing, activated by phosphorylation.

The catalysed reaction is alpha-D-glucosamine 1-phosphate = D-glucosamine 6-phosphate. In terms of biological role, catalyzes the conversion of glucosamine-6-phosphate to glucosamine-1-phosphate. In Lysinibacillus sphaericus (strain C3-41), this protein is Phosphoglucosamine mutase.